The chain runs to 91 residues: MTDTEVKAPKIEFPQVDYPVKVISDTGVGNKDKIIDIVKKHARINDERVDERQSSNGKYTTIQLHIVATDQDQLYNINSELRATGFVHMVL.

Belongs to the UPF0250 family.

The polypeptide is UPF0250 protein Pfl01_4965 (Pseudomonas fluorescens (strain Pf0-1)).